The chain runs to 101 residues: Small ribosomal subunit protein uS14 (101 aa).

The protein belongs to the universal ribosomal protein uS14 family. As to quaternary structure, part of the 30S ribosomal subunit. Contacts proteins S3 and S10.

Binds 16S rRNA, required for the assembly of 30S particles and may also be responsible for determining the conformation of the 16S rRNA at the A site. The sequence is that of Small ribosomal subunit protein uS14 from Paraburkholderia phymatum (strain DSM 17167 / CIP 108236 / LMG 21445 / STM815) (Burkholderia phymatum).